We begin with the raw amino-acid sequence, 233 residues long: uncharacterized protein (233 aa).

It belongs to the methyltransferase superfamily.

This is an uncharacterized protein from Bacillus subtilis (strain 168).